Reading from the N-terminus, the 280-residue chain is tRNA dimethylallyltransferase (280 aa).

9 to 16 (GPTGSGKT) is an ATP binding site. 11 to 16 (TGSGKT) lines the substrate pocket. Positions 34 to 37 (DSVS) are interaction with substrate tRNA.

It belongs to the IPP transferase family. As to quaternary structure, monomer. It depends on Mg(2+) as a cofactor.

The catalysed reaction is adenosine(37) in tRNA + dimethylallyl diphosphate = N(6)-dimethylallyladenosine(37) in tRNA + diphosphate. Its function is as follows. Catalyzes the transfer of a dimethylallyl group onto the adenine at position 37 in tRNAs that read codons beginning with uridine, leading to the formation of N6-(dimethylallyl)adenosine (i(6)A). This chain is tRNA dimethylallyltransferase, found in Acholeplasma laidlawii (strain PG-8A).